Here is a 350-residue protein sequence, read N- to C-terminus: tRNA N6-adenosine threonylcarbamoyltransferase (350 aa).

Residues His-117 and His-121 each coordinate Fe cation. Residues 140–144, Asp-173, Gly-186, and Asn-277 each bind substrate; that span reads LVSGG. Asp-305 is a binding site for Fe cation.

It belongs to the KAE1 / TsaD family. The cofactor is Fe(2+).

It is found in the cytoplasm. The catalysed reaction is L-threonylcarbamoyladenylate + adenosine(37) in tRNA = N(6)-L-threonylcarbamoyladenosine(37) in tRNA + AMP + H(+). Its function is as follows. Required for the formation of a threonylcarbamoyl group on adenosine at position 37 (t(6)A37) in tRNAs that read codons beginning with adenine. Is involved in the transfer of the threonylcarbamoyl moiety of threonylcarbamoyl-AMP (TC-AMP) to the N6 group of A37, together with TsaE and TsaB. TsaD likely plays a direct catalytic role in this reaction. This is tRNA N6-adenosine threonylcarbamoyltransferase from Novosphingobium aromaticivorans (strain ATCC 700278 / DSM 12444 / CCUG 56034 / CIP 105152 / NBRC 16084 / F199).